The following is a 120-amino-acid chain: UPF0231 protein YacL (120 aa).

The protein belongs to the UPF0231 family.

In Escherichia coli (strain SMS-3-5 / SECEC), this protein is UPF0231 protein YacL.